Reading from the N-terminus, the 109-residue chain is Putative RNase MJ1380 (109 aa).

Active-site residues include Arg76 and His81. The RX(4)HXY motif motif lies at Arg76–Tyr83. O-di-AMP-tyrosine is present on Tyr83.

This sequence belongs to the HepT RNase toxin family. Homodimer, probably forms a complex with cognate antitoxin MJ1379. In terms of processing, modified by cognate antitoxin MJ1379; probably at least 2 successive AMPylation events occur on Tyr-83.

Functionally, probable toxic component of a putative type VII toxin-antitoxin (TA) system, probably an RNase. Probably neutralized by cognate antitoxin MJ1379. Neutralization may be due to AMPylation by antitoxin MJ1379. The protein is Putative RNase MJ1380 of Methanocaldococcus jannaschii (strain ATCC 43067 / DSM 2661 / JAL-1 / JCM 10045 / NBRC 100440) (Methanococcus jannaschii).